A 512-amino-acid chain; its full sequence is ATP synthase subunit alpha (512 aa).

Position 169–176 (169–176 (GDRQTGKT)) interacts with ATP.

It belongs to the ATPase alpha/beta chains family. In terms of assembly, F-type ATPases have 2 components, CF(1) - the catalytic core - and CF(0) - the membrane proton channel. CF(1) has five subunits: alpha(3), beta(3), gamma(1), delta(1), epsilon(1). CF(0) has four main subunits: a(1), b(1), b'(1) and c(9-12).

Its subcellular location is the cell inner membrane. The enzyme catalyses ATP + H2O + 4 H(+)(in) = ADP + phosphate + 5 H(+)(out). Produces ATP from ADP in the presence of a proton gradient across the membrane. The alpha chain is a regulatory subunit. This Roseobacter denitrificans (strain ATCC 33942 / OCh 114) (Erythrobacter sp. (strain OCh 114)) protein is ATP synthase subunit alpha.